The primary structure comprises 339 residues: Spore coat polysaccharide biosynthesis protein SpsG (339 aa).

The chain crosses the membrane as a helical span at residues 241–261 (IVAGGISLYEAICIGVPCLVL).

It to M.jannaschii MJ1062.

It is found in the cell membrane. It functions in the pathway spore coat biogenesis; spore coat polysaccharide biosynthesis. This chain is Spore coat polysaccharide biosynthesis protein SpsG (spsG), found in Bacillus subtilis (strain 168).